Reading from the N-terminus, the 268-residue chain is Large ribosomal subunit protein uL3 (268 aa).

Glutamine 156 is subject to N5-methylglutamine. Positions 242–259 (VENEAAPADADNAAPEAA) are enriched in low complexity. The tract at residues 242 to 268 (VENEAAPADADNAAPEAAADGEEGTQA) is disordered.

This sequence belongs to the universal ribosomal protein uL3 family. Part of the 50S ribosomal subunit. Forms a cluster with proteins L14 and L19. Methylated by PrmB.

Functionally, one of the primary rRNA binding proteins, it binds directly near the 3'-end of the 23S rRNA, where it nucleates assembly of the 50S subunit. The protein is Large ribosomal subunit protein uL3 of Maricaulis maris (strain MCS10) (Caulobacter maris).